A 271-amino-acid chain; its full sequence is Mannosyl-3-phosphoglycerate phosphatase (271 aa).

Aspartate 13 acts as the Nucleophile in catalysis. Residues aspartate 13, aspartate 15, and aspartate 214 each coordinate Mg(2+).

This sequence belongs to the HAD-like hydrolase superfamily. MPGP family. Mg(2+) is required as a cofactor.

Its subcellular location is the cytoplasm. The enzyme catalyses 2-O-(alpha-D-mannosyl)-3-phosphoglycerate + H2O = (2R)-2-O-(alpha-D-mannosyl)-glycerate + phosphate. The chain is Mannosyl-3-phosphoglycerate phosphatase from Escherichia coli O81 (strain ED1a).